We begin with the raw amino-acid sequence, 64 residues long: MPKMKSNKSVAARFKLTGSGQLKRTRPGKRHKLSKRSSQQKRNLSKQPLVDQGQVGMYKRMMLV.

The interval 1-55 is disordered; that stretch reads MPKMKSNKSVAARFKLTGSGQLKRTRPGKRHKLSKRSSQQKRNLSKQPLVDQGQV. A compositionally biased stretch (basic residues) spans 23–39; it reads KRTRPGKRHKLSKRSSQ.

Belongs to the bacterial ribosomal protein bL35 family.

This is Large ribosomal subunit protein bL35 from Chlamydia muridarum (strain MoPn / Nigg).